Here is a 145-residue protein sequence, read N- to C-terminus: MIIDITEIMDWIPHRYPFLLVDRVLKIDPNKSITGIKNVTVNEPQFTGHFPARPVMPGVLMVEAMAQLAAVLVAKSLGSTKNKEVFLMTIENAKFRRIVQPGDTMYIHAVIDQQRANVWKFSSTVTVEGEIAAESKFTAMIKDKT.

His49 is a catalytic residue.

This sequence belongs to the thioester dehydratase family. FabZ subfamily.

Its subcellular location is the cytoplasm. The enzyme catalyses a (3R)-hydroxyacyl-[ACP] = a (2E)-enoyl-[ACP] + H2O. Functionally, involved in unsaturated fatty acids biosynthesis. Catalyzes the dehydration of short chain beta-hydroxyacyl-ACPs and long chain saturated and unsaturated beta-hydroxyacyl-ACPs. In Rickettsia africae (strain ESF-5), this protein is 3-hydroxyacyl-[acyl-carrier-protein] dehydratase FabZ.